We begin with the raw amino-acid sequence, 308 residues long: Ceramide synthase 1 LOH3 (308 aa).

6 helical membrane passes run 25-45 (VLPL…RFVF), 82-102 (CVYY…EPWF), 128-148 (LLYM…VFWE), 154-174 (FGVS…SYVC), 213-233 (FILF…FWIL), and 258-278 (YMFN…WVLM). Positions 73–287 (RKFKESAWKC…MYRMLVKQIQ (215 aa)) constitute a TLC domain. Phosphoserine is present on residues Ser298 and Ser300.

Expressed ubiquitously at low levels. Not observed in pollen.

It is found in the endoplasmic reticulum membrane. The enzyme catalyses (4R)-hydroxysphinganine + a fatty acyl-CoA = an N-acyl-(4R)-4-hydroxysphinganine + CoA + H(+). The catalysed reaction is a sphingoid base + tetracosanoyl-CoA = an N-tetracosanoyl-sphingoid base + CoA + H(+). It catalyses the reaction (4R)-hydroxysphinganine + hexadecanoyl-CoA = N-hexadecanoyl-(4R)-hydroxysphinganine + CoA + H(+). It carries out the reaction (4R)-hydroxysphinganine + octadecanoyl-CoA = N-octadecanoyl-(4R)-hydroxysphinganine + CoA + H(+). The enzyme catalyses (4R)-hydroxysphinganine + eicosanoyl-CoA = N-eicosanoyl-(4R)-hydroxysphinganine + CoA + H(+). The catalysed reaction is docosanoyl-CoA + (4R)-hydroxysphinganine = N-docosanoyl-(4R)-hydroxysphinganine + CoA + H(+). It catalyses the reaction hexacosanoyl-CoA + (4R)-hydroxysphinganine = N-hexacosanoyl-(4R)-hydroxysphinganine + CoA + H(+). It carries out the reaction tetracosanoyl-CoA + (4R)-hydroxysphinganine = N-tetracosanoyl-(4R)-hydroxysphinganine + CoA + H(+). The enzyme catalyses tetracosanoyl-CoA + sphing-4-enine = N-tetracosanoyl-sphing-4-enine + CoA + H(+). The catalysed reaction is sphinga-(4E,8Z)-dienine + tetracosanoyl-CoA = N-tetracosanoylsphinga-(4E,8Z)-dienine + CoA + H(+). It catalyses the reaction sphinga-(4E,8E)-dienine + tetracosanoyl-CoA = N-tetracosanoylsphinga-(4E,8E)-dienine + CoA + H(+). It carries out the reaction (4R)-hydroxysphing-(8Z)-enine + tetracosanoyl-CoA = N-tetracosanoyl-(4R)-hydroxysphing-(8Z)-enine + CoA + H(+). The enzyme catalyses (4R)-hydroxysphing-(8E)-enine + tetracosanoyl-CoA = N-tetracosanoyl-(4R)-hydroxysphing-(8E)-enine + CoA + H(+). It participates in sphingolipid metabolism. With respect to regulation, inhibited by the mycotoxin fumonisin B(1), a sphingosine analog mycotoxins produced by pathogenic fungi. Repressed by divalent cation such as magnesium Mg(2+), copper Cu(2+), zinc Zn(2+), manganese Mn(2+), calcium Ca(2+) and cobalt Co(2+). In terms of biological role, essential for plant growth, promotes cell division in root meristems. Catalyzes the biosynthesis of ceramide sphingolipids with C(16) to C(28) fatty acids, structural membrane lipids involved in membrane trafficking (e.g. early endosomes) and cell polarity (e.g. polar auxin transport related proteins); active on a broad substrate spectrum, both regarding chain lengths of fatty acids and the sphingoid base, such as long-chain base (LCB) phytosphingosine (t18:0). Mediates resistance to sphinganine-analog mycotoxins (SAMs, e.g. fumonisin B(1)) by restoring the sphingolipid biosynthesis. Could salvage the transport of GPI-anchored proteins from the endoplasmic reticulum to the Golgi apparatus in ceramides-depleted cells after SAM exposure. Contributes to hypoxic conditions tolerance (e.g. submergences), especially in the dark, by promoting the formation of very-long-chain (VLC) ceramide species (22:1, 24:1 and 26:1) and of VLC unsaturated ceramides, which are modulating CTR1-mediated ethylene signaling leading to endoplasmic reticulum (ER)-to-nucleus translocation of EIN2 and EIN3. This is Ceramide synthase 1 LOH3 from Arabidopsis thaliana (Mouse-ear cress).